A 188-amino-acid polypeptide reads, in one-letter code: Pro-adrenomedullin (188 aa).

The signal sequence occupies residues 1–21; the sequence is MKLVPVALLYLGSLAFLGADT. Arginine 41 is modified (arginine amide). Positions 45–92 are excised as a propeptide; the sequence is ELRVSSSYPTGLAEVKAGPAQTLIRTQDVKGASRNPQTSGPDAARIRV. A disulfide bridge links cysteine 110 with cysteine 115. Positions 131-176 are disordered; sequence DKDGVAPRSKISPQGYGRRRRRSLPEPGLRRTLLFPEPRPGGAPAP. Residue tyrosine 146 is modified to Tyrosine amide. Residues 153 to 188 constitute a propeptide, preproAM C-terminal fragment; the sequence is SLPEPGLRRTLLFPEPRPGGAPAPRAHQVLANLLKM.

The protein belongs to the adrenomedullin family.

The protein resides in the secreted. Adrenomedullin/ADM and proadrenomedullin N-20 terminal peptide/PAMP are peptide hormones that act as potent hypotensive and vasodilatator agents. Numerous actions have been reported most related to the physiologic control of fluid and electrolyte homeostasis. Functionally, ADM function is mediated by the CALCRL-RAMP2 and CALCRL-RAMP3 receptor complexes with ADM showing the highest potency for the CALCRL-RAMP2 complex. The polypeptide is Pro-adrenomedullin (ADM) (Canis lupus familiaris (Dog)).